Consider the following 733-residue polypeptide: Vinexin (733 aa).

Disordered stretches follow at residues 1–51 (MARI…SNLD), 129–165 (TWPGPGSRPSMSPKPPASQHAQNWSATWTKDSKRQDK), 224–285 (SARA…NQVP), and 352–448 (ETRL…KRKA). Residues 32–42 (DPNRVHTKEQL) show a composition bias toward basic and acidic residues. Residues 147–157 (QHAQNWSATWT) show a composition bias toward polar residues. A SoHo domain is found at 164 to 232 (DKRWVKYEGI…VSARASSAEP (69 aa)). Polar residues-rich tracts occupy residues 245 to 256 (PGTTETSSGRNW) and 264 to 277 (RNTFNYNFRPSSSG). 2 positions are modified to phosphoserine: S412 and S459. SH3 domains follow at residues 444 to 503 (KKRK…VLPA) and 518 to 579 (LEYG…INRE). The tract at residues 444–579 (KKRKAARLKF…PASYVQINRE (136 aa)) is binds to vinculin. The tract at residues 584–672 (LCDDGPQLPA…INLGPSSPNT (89 aa)) is disordered. S594 carries the phosphoserine; by MAPK1 modification. The segment covering 597–613 (PTTTAHLSSHSHPSSIP) has biased composition (low complexity). 3 positions are modified to phosphoserine: S607, S610, and S624. Positions 638-651 (EPRSQTQSLNTPGP) are enriched in polar residues. The SH3 3 domain occupies 674 to 733 (IHWTPYRAMYQYRPQNEDELELREGDRVDVMQQCDDGWFVGVSRRTQKFGTFPGNYVAPV). The tract at residues 674-733 (IHWTPYRAMYQYRPQNEDELELREGDRVDVMQQCDDGWFVGVSRRTQKFGTFPGNYVAPV) is binds to SOS.

Interacts with vinculin by the first two SH3 domains and the proline rich region of vinculin. Binds to SOS (guanine nucleotide exchange factor of RAS and RAC), through its third SH3 domain. The formation of this complex is down-regulated by phosphorylation of SOS. Interacts with SAFB2, INPPL1/SHIP2 and SRCIN1. Interacts with DLG5 through its third SH3 domain. Interacts with SOCS7 and MAPK1/ERK2. Interacts with FASLG. Phosphorylated at Ser-594 by MAPK1/ERK2 during cell spreading.

The protein localises to the cell junction. Its subcellular location is the focal adhesion. It localises to the cytoplasm. The protein resides in the cytoskeleton. In terms of biological role, promotes up-regulation of actin stress fiber formation. The sequence is that of Vinexin (Sorbs3) from Mus musculus (Mouse).